A 250-amino-acid chain; its full sequence is Manganese transport system ATP-binding protein MntB (250 aa).

The ABC transporter domain maps to valine 4–leucine 236. Glycine 36–serine 43 serves as a coordination point for ATP.

This sequence belongs to the ABC transporter superfamily. The complex is probably composed of two ATP-binding proteins (MntB), two transmembrane proteins (MntC and MntD) and a solute-binding protein (MntA).

The protein resides in the cell membrane. Probably part of the ABC transporter complex MntABCD involved in manganese import. Probably responsible for energy coupling to the transport system. The chain is Manganese transport system ATP-binding protein MntB from Bacillus subtilis (strain 168).